A 159-amino-acid polypeptide reads, in one-letter code: Protein-export protein SecB (159 aa).

It belongs to the SecB family. As to quaternary structure, homotetramer, a dimer of dimers. One homotetramer interacts with 1 SecA dimer.

The protein resides in the cytoplasm. In terms of biological role, one of the proteins required for the normal export of preproteins out of the cell cytoplasm. It is a molecular chaperone that binds to a subset of precursor proteins, maintaining them in a translocation-competent state. It also specifically binds to its receptor SecA. The chain is Protein-export protein SecB from Aromatoleum aromaticum (strain DSM 19018 / LMG 30748 / EbN1) (Azoarcus sp. (strain EbN1)).